A 530-amino-acid chain; its full sequence is Bifunctional purine biosynthesis protein PurH (530 aa).

An MGS-like domain is found at 1–148 (MNNARPIRRA…KNHKDVTIVV (148 aa)).

It belongs to the PurH family.

It catalyses the reaction (6R)-10-formyltetrahydrofolate + 5-amino-1-(5-phospho-beta-D-ribosyl)imidazole-4-carboxamide = 5-formamido-1-(5-phospho-D-ribosyl)imidazole-4-carboxamide + (6S)-5,6,7,8-tetrahydrofolate. It carries out the reaction IMP + H2O = 5-formamido-1-(5-phospho-D-ribosyl)imidazole-4-carboxamide. Its pathway is purine metabolism; IMP biosynthesis via de novo pathway; 5-formamido-1-(5-phospho-D-ribosyl)imidazole-4-carboxamide from 5-amino-1-(5-phospho-D-ribosyl)imidazole-4-carboxamide (10-formyl THF route): step 1/1. It functions in the pathway purine metabolism; IMP biosynthesis via de novo pathway; IMP from 5-formamido-1-(5-phospho-D-ribosyl)imidazole-4-carboxamide: step 1/1. The chain is Bifunctional purine biosynthesis protein PurH from Aliivibrio fischeri (strain ATCC 700601 / ES114) (Vibrio fischeri).